A 566-amino-acid polypeptide reads, in one-letter code: Lamin-1 (566 aa).

The segment at 1–37 (MSSRKGTRSSRIVTLERSANSSLSNNGGGDDSFGSTL) is disordered. Ser2 bears the N-acetylserine mark. A head region spans residues 13 to 47 (VTLERSANSSLSNNGGGDDSFGSTLLETSRLQEKD). One can recognise an IF rod domain in the interval 45 to 387 (EKDHLTSLNS…ALLEGEEERL (343 aa)). Residues 48–82 (HLTSLNSRLATYIDKVRQLEQENNRLQVQIRDIEV) are coil 1A. Residues 83-94 (VEKKEKSNLADR) are linker 1. Residues 95–228 (FEAEKARLRR…AFALQQHKGE (134 aa)) form a coil 1B region. A linker 2 region spans residues 229–256 (LEEVRHKRQVDMTTYAKQINDEYQSKLQ). A coil 2 region spans residues 257 to 385 (DQIEEMRAQF…YQALLEGEEE (129 aa)). The segment at 386-566 (RLNLTQEAPQ…SDPADRCSIM (181 aa)) is tail. An LTD domain is found at 435–550 (RRSKLNKETV…DTVSSITVEF (116 aa)). The tract at residues 528–566 (GDNPSARLEDSEGDTVSSITVEFSESSDPSDPADRCSIM) is disordered. Positions 541-556 (DTVSSITVEFSESSDP) are enriched in polar residues. Cysteine methyl ester is present on Cys563. Residue Cys563 is the site of S-farnesyl cysteine attachment. Residues 564 to 566 (SIM) constitute a propeptide, removed in mature form.

Belongs to the intermediate filament family. As to quaternary structure, interacts with LEM domain proteins lem-2 and emr-1. May interact with unc-84; this interaction may be required to complete the connection between the nuclear lamina and the cytoskeleton. Ubiquitous. Expressed in all cells, except in cells undergoing spermatogenesis.

It is found in the nucleus envelope. The protein resides in the nucleus inner membrane. Functionally, major component of the nuclear lamina, a fibrous layer on the nucleoplasmic side of the inner nuclear membrane. Provides a framework for the nuclear envelope and probably also interacts with chromatin. Essential to maintain the shape and integrity of the nucleus, and for DNA replication. Involved in spatial organization of nuclear pore complexes. It is not a target for ced-3 during apoptosis, suggesting that lamin cleavage is not essential for apoptosis in C.elegans. The protein is Lamin-1 of Caenorhabditis elegans.